The sequence spans 1079 residues: BRD4-interacting chromatin-remodeling complex-associated protein-like (1079 aa).

Disordered regions lie at residues 51–79 (NSSN…LPLS) and 509–604 (LHLS…TPGT). Residues 68–79 (LGEGPSDGLPLS) show a composition bias toward low complexity. Residues 544–576 (SSASTAHPSLGSAVQSGSSGSNFTGDQLTQPNR) are compositionally biased toward polar residues. Residues 590-604 (SSSKSTSTFSNTPGT) show a composition bias toward low complexity. Ser-623 is modified (phosphoserine). 3 disordered regions span residues 669-691 (EKVV…GGQK), 837-877 (TQFG…NHDQ), and 917-954 (TSEE…TESK). 2 stretches are compositionally biased toward basic and acidic residues: residues 918–928 (SEEKASRREPL) and 938–952 (EGHR…HGTE). Phosphoserine is present on Ser-980.

As to quaternary structure, component of the multiprotein chromatin-remodeling complexes SWI/SNF: SWI/SNF-A (BAF), SWI/SNF-B (PBAF) and related complexes. The canonical complex contains a catalytic subunit (either SMARCA4/BRG1/BAF190A or SMARCA2/BRM/BAF190B) and at least SMARCE1, ACTL6A/BAF53, SMARCC1/BAF155, SMARCC2/BAF170, and SMARCB1/SNF5/BAF47. Other subunits specific to each of the complexes may also be present permitting several possible combinations developmentally and tissue specific. Component of the SWI/SNF (GBAF) subcomplex, which includes at least BICRA or BICRAL (mutually exclusive), BRD9, SS18, the core BAF subunits, SMARCA2/BRM, SMARCA4/BRG1/BAF190A, ACTL6A/BAF53, SMARCC1/BAF155, and SMARCD1/BAF60A.

Component of SWI/SNF chromatin remodeling subcomplex GBAF that carries out key enzymatic activities, changing chromatin structure by altering DNA-histone contacts within a nucleosome in an ATP-dependent manner. The sequence is that of BRD4-interacting chromatin-remodeling complex-associated protein-like from Homo sapiens (Human).